The chain runs to 770 residues: MSELNEMQKLAWAGFAGGDWQENVNVRDFIQKNYTPYEGDDSFLAGPTEATTKLWESVMEGIKIENRTHAPLDFDEHTPSTIISHAPGYINKDLEKIVGLQTDEPLKRAIMPFGGIKMVEGSCKVYGRELDPKVKKIFTEYRKTHNQGVFDVYTPDILRCRKSGVLTGLPDAYGRGRIIGDYRRVALYGVDFLMKDKYAQFSSLQKDLEDGVNLEATIRLREEIAEQHRALGQLKQMAASYGYDISNPATNAQEAIQWMYFAYLAAIKSQNGAAMSFGRTATFIDVYIERDLKAGKITETEAQELVDHLVMKLRMVRFLRTPEYDQLFSGDPMWATETIAGMGLDGRTLVTKNTFRILHTLYNMGTSPEPNLTILWSEQLPENFKRFCAKVSIDTSSVQYENDDLMRPDFNNDDYAIACCVSPMIVGKQMQFFGARANLAKTLLYAINGGIDEKLGMQVGPKTAPITDEVLDFDTVMTRMDSFMDWLAKQYVTALNVIHYMHDKYSYEAALMALHDRDVYRTMACGIAGLSVAADSLSAIKYAKVKPVRGDIKDKDGNVVATNVAIDFEIEGEYPQYGNNDNRVDDIACDLVERFMKKIQKLKTYRNAVPTQSVLTITSNVVYGKKTGNTPDGRRAGAPFGPGANPMHGRDQKGAVASLTSVAKLPFAYAKDGISYTFSIVPNALGKDAEAQRRNLAGLMDGYFHHEATVEGGQHLNVNVLNREMLLDAMENPDKYPQLTIRVSGYAVRFNSLTKEQQQDVITRTFTESM.

A PFL domain is found at 5-635 (NEMQKLAWAG…KTGNTPDGRR (631 aa)). Cysteine 419 acts as the S-acetylcysteine intermediate in catalysis. Cysteine 420 (cysteine radical intermediate) is an active-site residue. A Glycine radical domain is found at 642-770 (PGANPMHGRD…VITRTFTESM (129 aa)). Residue glycine 745 is modified to Glycine radical.

It belongs to the glycyl radical enzyme (GRE) family. PFL subfamily. In terms of assembly, homodimer.

It localises to the cytoplasm. It catalyses the reaction formate + acetyl-CoA = pyruvate + CoA. It participates in fermentation; pyruvate fermentation; formate from pyruvate: step 1/1. Catalyzes the conversion of pyruvate to formate and acetyl-CoA. The protein is Formate acetyltransferase (pflB) of Haemophilus influenzae (strain ATCC 51907 / DSM 11121 / KW20 / Rd).